A 123-amino-acid chain; its full sequence is Phospholipase A2 (123 aa).

7 disulfide bridges follow: cysteine 11–cysteine 77, cysteine 27–cysteine 123, cysteine 29–cysteine 45, cysteine 44–cysteine 105, cysteine 51–cysteine 98, cysteine 61–cysteine 91, and cysteine 84–cysteine 96. Ca(2+) contacts are provided by tyrosine 28, glycine 30, and glycine 32. The active site involves histidine 48. Ca(2+) is bound at residue aspartate 49. Residue aspartate 99 is part of the active site.

It belongs to the phospholipase A2 family. As to quaternary structure, monomer or homodimer. Ca(2+) is required as a cofactor. In terms of processing, activated by trypsin cleavage in the duodenum. Can also be activated by thrombin or autocatalytically.

The protein resides in the secreted. It catalyses the reaction a 1,2-diacyl-sn-glycero-3-phosphocholine + H2O = a 1-acyl-sn-glycero-3-phosphocholine + a fatty acid + H(+). The catalysed reaction is 1,2-ditetradecanoyl-sn-glycero-3-phosphocholine + H2O = 1-tetradecanoyl-sn-glycero-3-phosphocholine + tetradecanoate + H(+). It carries out the reaction 1,2-dihexadecanoyl-sn-glycero-3-phosphocholine + H2O = 1-hexadecanoyl-sn-glycero-3-phosphocholine + hexadecanoate + H(+). The enzyme catalyses 1-hexadecanoyl-2-(9Z-octadecenoyl)-sn-glycero-3-phosphocholine + H2O = 1-hexadecanoyl-sn-glycero-3-phosphocholine + (9Z)-octadecenoate + H(+). It catalyses the reaction 1-hexadecanoyl-2-(5Z,8Z,11Z,14Z-eicosatetraenoyl)-sn-glycero-3-phosphocholine + H2O = 1-hexadecanoyl-sn-glycero-3-phosphocholine + (5Z,8Z,11Z,14Z)-eicosatetraenoate + H(+). The catalysed reaction is 1-hexadecanoyl-2-(9Z-octadecenoyl)-sn-glycero-3-phospho-(1'-sn-glycerol) + H2O = 1-hexadecanoyl-sn-glycero-3-phospho-(1'-sn-glycerol) + (9Z)-octadecenoate + H(+). It carries out the reaction N-hexadecanoyl-1,2-di-(9Z-octadecenoyl)-sn-glycero-3-phosphoethanolamine + H2O = N-hexadecanoyl-1-(9Z-octadecenoyl)-sn-glycero-3-phosphoethanolamine + (9Z)-octadecenoate + H(+). The enzyme catalyses 1-hexadecanoyl-2-(9Z,12Z-octadecadienoyl)-sn-glycero-3-phosphoethanolamine + H2O = 1-hexadecanoyl-sn-glycero-3-phosphoethanolamine + (9Z,12Z)-octadecadienoate + H(+). It catalyses the reaction N,1-dihexadecanoyl-2-(9Z,12Z-octadecadienoyl)-sn-glycero-3-phosphoethanolamine + H2O = N,1-dihexadecanoyl-sn-glycero-3-phosphoethanolamine + (9Z,12Z)-octadecadienoate + H(+). Secretory calcium-dependent phospholipase A2 that primarily targets dietary phospholipids in the intestinal tract. Hydrolyzes the ester bond of the fatty acyl group attached at sn-2 position of phospholipids (phospholipase A2 activity) with preference for phosphatidylethanolamines and phosphatidylglycerols over phosphatidylcholines. May play a role in the biosynthesis of N-acyl ethanolamines that regulate energy metabolism and inflammation in the intestinal tract. Hydrolyzes N-acyl phosphatidylethanolamines to N-acyl lysophosphatidylethanolamines, which are further cleaved by a lysophospholipase D to release N-acyl ethanolamines. May act in an autocrine and paracrine manner. Has anti-helminth activity in a process regulated by gut microbiota. Upon helminth infection of intestinal epithelia, directly affects phosphatidylethanolamine contents in the membrane of helminth larvae, likely controlling an array of phospholipid-mediated cellular processes such as membrane fusion and cell division while providing for better immune recognition, ultimately reducing larvae integrity and infectivity. This Ovis aries (Sheep) protein is Phospholipase A2 (PLA2G1B).